The primary structure comprises 296 residues: Light-independent protochlorophyllide reductase iron-sulfur ATP-binding protein (296 aa).

Residues 39–44 (GIGKST) and lysine 68 contribute to the ATP site. Serine 43 contacts Mg(2+). Positions 124 and 158 each coordinate [4Fe-4S] cluster. Residue 209–210 (NR) coordinates ATP.

This sequence belongs to the NifH/BchL/ChlL family. Homodimer. Protochlorophyllide reductase is composed of three subunits; ChlL, ChlN and ChlB. The cofactor is [4Fe-4S] cluster.

It carries out the reaction chlorophyllide a + oxidized 2[4Fe-4S]-[ferredoxin] + 2 ADP + 2 phosphate = protochlorophyllide a + reduced 2[4Fe-4S]-[ferredoxin] + 2 ATP + 2 H2O. It participates in porphyrin-containing compound metabolism; chlorophyll biosynthesis (light-independent). Functionally, component of the dark-operative protochlorophyllide reductase (DPOR) that uses Mg-ATP and reduced ferredoxin to reduce ring D of protochlorophyllide (Pchlide) to form chlorophyllide a (Chlide). This reaction is light-independent. The L component serves as a unique electron donor to the NB-component of the complex, and binds Mg-ATP. This Prochlorococcus marinus (strain MIT 9313) protein is Light-independent protochlorophyllide reductase iron-sulfur ATP-binding protein.